The primary structure comprises 150 residues: MNTNNLLLENKKAKFNYFIEEKISCGIVLKGTEVKSIKAKKLSFNNSFASIKKEELWLENLHVSKYKEGNIFNHDELRPRKLLIKKRELQRLKKFKEKEGYTLIPISFYLKKSIIKVEVGICKGKKLYDKREILKQKSIKKDLSREIKYK.

The protein belongs to the SmpB family.

The protein resides in the cytoplasm. In terms of biological role, required for rescue of stalled ribosomes mediated by trans-translation. Binds to transfer-messenger RNA (tmRNA), required for stable association of tmRNA with ribosomes. tmRNA and SmpB together mimic tRNA shape, replacing the anticodon stem-loop with SmpB. tmRNA is encoded by the ssrA gene; the 2 termini fold to resemble tRNA(Ala) and it encodes a 'tag peptide', a short internal open reading frame. During trans-translation Ala-aminoacylated tmRNA acts like a tRNA, entering the A-site of stalled ribosomes, displacing the stalled mRNA. The ribosome then switches to translate the ORF on the tmRNA; the nascent peptide is terminated with the 'tag peptide' encoded by the tmRNA and targeted for degradation. The ribosome is freed to recommence translation, which seems to be the essential function of trans-translation. The chain is SsrA-binding protein from Borreliella burgdorferi (strain ATCC 35210 / DSM 4680 / CIP 102532 / B31) (Borrelia burgdorferi).